Consider the following 395-residue polypeptide: S-adenosylmethionine synthase (395 aa).

His16 is a binding site for ATP. Asp18 provides a ligand contact to Mg(2+). Position 44 (Glu44) interacts with K(+). 2 residues coordinate L-methionine: Glu57 and Gln100. The flexible loop stretch occupies residues 100-110; the sequence is QSPDIAGGVNL. ATP contacts are provided by residues 175 to 177, 242 to 243, Asp251, 257 to 258, Ala274, and Lys278; these read DGK, RF, and RK. Asp251 lines the L-methionine pocket. Lys282 is a binding site for L-methionine.

Belongs to the AdoMet synthase family. In terms of assembly, homotetramer; dimer of dimers. Requires Mg(2+) as cofactor. K(+) is required as a cofactor.

The protein localises to the cytoplasm. The enzyme catalyses L-methionine + ATP + H2O = S-adenosyl-L-methionine + phosphate + diphosphate. The protein operates within amino-acid biosynthesis; S-adenosyl-L-methionine biosynthesis; S-adenosyl-L-methionine from L-methionine: step 1/1. Catalyzes the formation of S-adenosylmethionine (AdoMet) from methionine and ATP. The overall synthetic reaction is composed of two sequential steps, AdoMet formation and the subsequent tripolyphosphate hydrolysis which occurs prior to release of AdoMet from the enzyme. In Thermus thermophilus (strain ATCC BAA-163 / DSM 7039 / HB27), this protein is S-adenosylmethionine synthase.